We begin with the raw amino-acid sequence, 397 residues long: Beta-lactamase (397 aa).

A signal peptide spans 1–26; the sequence is MRDTRFPCLCGIAASTLLFATTPAIA. The active-site Acyl-ester intermediate is Ser-90. Residues Ser-90, Gln-146, Tyr-177, Asn-179, and Asn-370 each coordinate a beta-lactam. The Proton acceptor role is filled by Tyr-177.

It belongs to the class-C beta-lactamase family. In terms of assembly, monomer.

The protein localises to the periplasm. The enzyme catalyses a beta-lactam + H2O = a substituted beta-amino acid. Its function is as follows. Class C beta-lactamase which confers resistance to penicillins and cephalosporins. Has nitrocefin-hydrolyzing activity. This is Beta-lactamase (ampC) from Pseudomonas aeruginosa (strain ATCC 15692 / DSM 22644 / CIP 104116 / JCM 14847 / LMG 12228 / 1C / PRS 101 / PAO1).